The sequence spans 260 residues: Small ribosomal subunit protein uS3 (260 aa).

A KH type-2 domain is found at 39 to 114 (LRQYIEQKLG…QIRINVVEVQ (76 aa)). The interval 217–260 (GQEPDPLPPASRDRERDPRDRDREPRRRQQQRRRQQFEDRSNEG) is disordered. Basic and acidic residues-rich tracts occupy residues 227-243 (SRDR…EPRR) and 251-260 (QQFEDRSNEG).

Belongs to the universal ribosomal protein uS3 family. In terms of assembly, part of the 30S ribosomal subunit. Forms a tight complex with proteins S10 and S14.

Functionally, binds the lower part of the 30S subunit head. Binds mRNA in the 70S ribosome, positioning it for translation. The chain is Small ribosomal subunit protein uS3 from Nostoc punctiforme (strain ATCC 29133 / PCC 73102).